The following is a 274-amino-acid chain: 16S rRNA (guanine(1405)-N(7))-methyltransferase (274 aa).

Residues 102 to 108 (HISTRER), A133, D156, 182 to 183 (DL), L198, and Q207 contribute to the S-adenosyl-L-methionine site.

This sequence belongs to the methyltransferase superfamily. Aminoglycoside resistance family.

It catalyses the reaction guanosine(1405) in 16S rRNA + S-adenosyl-L-methionine = N(7)-methylguanosine(1405) in 16S rRNA + S-adenosyl-L-homocysteine. In terms of biological role, specifically methylates the N(7) position of guanine 1405 in 16S rRNA. Confers resistance to various aminoglycosides, including gentamicin, kanamycin and sisomicin. The polypeptide is 16S rRNA (guanine(1405)-N(7))-methyltransferase (sgm) (Micromonospora zionensis).